A 1146-amino-acid chain; its full sequence is Activator of SKN7 protein 10 (1146 aa).

The segment covering 1–15 has biased composition (polar residues); the sequence is MSDYFSSRPSQTLTP. Disordered stretches follow at residues 1 to 32 and 171 to 194; these read MSDYFSSRPSQTLTPMGNKPSGGGGGDDASSI and ITDPFTTAPRGPKKAQPAQKKVGL. Ser344 carries the phosphoserine modification. The PH domain maps to 482 to 606; that stretch reads CIKAGYFLKK…DCTLKDASST (125 aa). Residues 553 to 575 form a disordered region; that stretch reads NNHHRQASDVHNSSTTTGGTAGA. The segment covering 564–575 has biased composition (low complexity); sequence NSSTTTGGTAGA. The residue at position 793 (Ser793) is a Phosphoserine. A Phosphothreonine modification is found at Thr808. Disordered regions lie at residues 835–854 and 909–982; these read MATSGNTTPSYSSGSRPQSM and PVNS…TAMR. Residues 912–924 show a composition bias toward low complexity; the sequence is SPGSSNSESSSGG. The span at 939–950 shows a compositional bias: polar residues; that stretch reads YTQRNSEGSSPC. Ser944 is subject to Phosphoserine. The span at 958–968 shows a compositional bias: low complexity; sequence QQQQPLQMQPL. Residue Ser969 is modified to Phosphoserine. Polar residues predominate over residues 969 to 982; the sequence is SRTSSSSVNVTAMR. Thr1017 is modified (phosphothreonine). 3 positions are modified to phosphoserine: Ser1070, Ser1095, and Ser1098. The tract at residues 1124–1146 is disordered; that stretch reads GIQEDDGDSTNNDTIKLNQSIYS. A compositionally biased stretch (polar residues) spans 1132-1146; the sequence is STNNDTIKLNQSIYS.

This sequence belongs to the RGC1 family. In terms of assembly, component of the RNA polymerase II holoenzyme. Interacts with RPO21 and SSN8. In terms of processing, phosphorylated in response to various stresses. stress-induced phosphorylation is partially dependent on HOG1.

It localises to the cytoplasm. Its function is as follows. Positive regulator of FPS1 glycerol channel required for the glycerol efflux. As a component of the RNA polymerase II holoenzyme, is required for SSN8 destruction in response to oxidative stress but not heat shock. Required for cell survival in response to heat shock independent of SSN8. This Saccharomyces cerevisiae (strain ATCC 204508 / S288c) (Baker's yeast) protein is Activator of SKN7 protein 10 (ASK10).